A 704-amino-acid polypeptide reads, in one-letter code: Elongation factor G (704 aa).

The 284-residue stretch at Asp-8–Val-291 folds into the tr-type G domain. GTP-binding positions include Ala-17–Thr-24, Asp-90–His-94, and Asn-144–Asp-147.

Belongs to the TRAFAC class translation factor GTPase superfamily. Classic translation factor GTPase family. EF-G/EF-2 subfamily.

It localises to the cytoplasm. Its function is as follows. Catalyzes the GTP-dependent ribosomal translocation step during translation elongation. During this step, the ribosome changes from the pre-translocational (PRE) to the post-translocational (POST) state as the newly formed A-site-bound peptidyl-tRNA and P-site-bound deacylated tRNA move to the P and E sites, respectively. Catalyzes the coordinated movement of the two tRNA molecules, the mRNA and conformational changes in the ribosome. The polypeptide is Elongation factor G (Chlorobium limicola (strain DSM 245 / NBRC 103803 / 6330)).